Here is a 94-residue protein sequence, read N- to C-terminus: Co-chaperonin GroES (94 aa).

This sequence belongs to the GroES chaperonin family. As to quaternary structure, heptamer of 7 subunits arranged in a ring. Interacts with the chaperonin GroEL.

It is found in the cytoplasm. In terms of biological role, together with the chaperonin GroEL, plays an essential role in assisting protein folding. The GroEL-GroES system forms a nano-cage that allows encapsulation of the non-native substrate proteins and provides a physical environment optimized to promote and accelerate protein folding. GroES binds to the apical surface of the GroEL ring, thereby capping the opening of the GroEL channel. The protein is Co-chaperonin GroES of Clostridium kluyveri (strain NBRC 12016).